The sequence spans 326 residues: Pyruvate dehydrogenase E1 component subunit beta (326 aa).

Glutamate 59 is a thiamine diphosphate binding site.

Heterodimer of an alpha and a beta chain. The cofactor is thiamine diphosphate.

The enzyme catalyses N(6)-[(R)-lipoyl]-L-lysyl-[protein] + pyruvate + H(+) = N(6)-[(R)-S(8)-acetyldihydrolipoyl]-L-lysyl-[protein] + CO2. Its function is as follows. The pyruvate dehydrogenase complex catalyzes the overall conversion of pyruvate to acetyl-CoA and CO(2). It contains multiple copies of three enzymatic components: pyruvate dehydrogenase (E1), dihydrolipoamide acetyltransferase (E2) and lipoamide dehydrogenase (E3). The chain is Pyruvate dehydrogenase E1 component subunit beta (pdhB) from Rickettsia felis (strain ATCC VR-1525 / URRWXCal2) (Rickettsia azadi).